We begin with the raw amino-acid sequence, 126 residues long: Holo-[acyl-carrier-protein] synthase (126 aa).

Positions 9 and 58 each coordinate Mg(2+).

This sequence belongs to the P-Pant transferase superfamily. AcpS family. Requires Mg(2+) as cofactor.

Its subcellular location is the cytoplasm. The enzyme catalyses apo-[ACP] + CoA = holo-[ACP] + adenosine 3',5'-bisphosphate + H(+). Its function is as follows. Transfers the 4'-phosphopantetheine moiety from coenzyme A to a Ser of acyl-carrier-protein. The sequence is that of Holo-[acyl-carrier-protein] synthase from Citrobacter koseri (strain ATCC BAA-895 / CDC 4225-83 / SGSC4696).